Consider the following 459-residue polypeptide: Cysteine--tRNA ligase (459 aa).

Cysteine 28 is a binding site for Zn(2+). The 'HIGH' region signature appears at 30-40 (VTVYDLCHFGH). 3 residues coordinate Zn(2+): cysteine 209, histidine 234, and glutamate 238. Positions 266-270 (KMSKS) match the 'KMSKS' region motif. Lysine 269 lines the ATP pocket.

It belongs to the class-I aminoacyl-tRNA synthetase family. Monomer. Zn(2+) is required as a cofactor.

The protein localises to the cytoplasm. The catalysed reaction is tRNA(Cys) + L-cysteine + ATP = L-cysteinyl-tRNA(Cys) + AMP + diphosphate. The sequence is that of Cysteine--tRNA ligase from Actinobacillus pleuropneumoniae serotype 3 (strain JL03).